Here is a 347-residue protein sequence, read N- to C-terminus: MDRFRMLFQHLQSSSESVMNGICLLLAAVTVKIYSSLDFNCPCLERYNALYGLGLLLTPPLALFLCGLLVNRQSVLMVEEWRRPAGHRRKDLGIIRYMCSSVLQRALAAPLVWILLALLDGKCFVCAFSNSVDPEKFLDFANMTPRQVQLFLAKVPCKEDELVKNSPARKAVSRYLRCLSQAIGWSITLLVIVVAFLARCLRPCFDQTVFLQRRYWSNYMDLEQKLFDETCCEHARDFAHRCVLHFFANMQSELRALGLRRDPAGGIPESQESSEPPELREDRDSGNGKAHLRAISSREQVDQLLSTWYSSKPPLDLAASPRRWGPGLNHRAPIAAPGTKLCHQLNV.

Residues 1–20 (MDRFRMLFQHLQSSSESVMN) lie on the Cytoplasmic side of the membrane. Residues 9 to 36 (QHLQSSSESVMNGICLLLAAVTVKIYSS) are central pore. Residues 21–36 (GICLLLAAVTVKIYSS) traverse the membrane as a helical segment. Residues 37–48 (LDFNCPCLERYN) are Extracellular-facing. Cystine bridges form between Cys-41/Cys-126 and Cys-43/Cys-157. The chain crosses the membrane as a helical span at residues 49–71 (ALYGLGLLLTPPLALFLCGLLVN). Topologically, residues 72–98 (RQSVLMVEEWRRPAGHRRKDLGIIRYM) are cytoplasmic. The S-palmitoyl cysteine moiety is linked to residue Cys-99. Residues 99 to 124 (CSSVLQRALAAPLVWILLALLDGKCF) traverse the membrane as a helical segment. Topologically, residues 125–176 (VCAFSNSVDPEKFLDFANMTPRQVQLFLAKVPCKEDELVKNSPARKAVSRYL) are extracellular. Residue Asn-142 is glycosylated (N-linked (GlcNAc...) asparagine). Residues 177 to 202 (RCLSQAIGWSITLLVIVVAFLARCLR) traverse the membrane as a helical segment. Residues Cys-200 and Cys-204 are each lipidated (S-palmitoyl cysteine). Over 203-347 (PCFDQTVFLQ…GTKLCHQLNV (145 aa)) the chain is Cytoplasmic. Residues 265 to 290 (GGIPESQESSEPPELREDRDSGNGKA) are disordered. The segment covering 277–286 (PELREDRDSG) has biased composition (basic and acidic residues).

Belongs to the CALHM family. Associates with CALHM1 as a pore-forming subunit in a hetero-hexameric channel complex. In terms of processing, N-glycosylated. Post-translationally, palmitoylated by ZDHHC3 and ZDHHC15. Palmitoylation positively regulates CALHM1:CALHM3 channel conductance. In terms of tissue distribution, expressed in taste bud cells.

The protein resides in the basolateral cell membrane. The enzyme catalyses ATP(in) = ATP(out). It carries out the reaction Ca(2+)(in) = Ca(2+)(out). It catalyses the reaction Na(+)(in) = Na(+)(out). The catalysed reaction is K(+)(in) = K(+)(out). The enzyme catalyses chloride(in) = chloride(out). Pore-forming subunit of gustatory voltage-gated ion channels required for sensory perception of sweet, bitter and umami tastes. With CALHM1 forms a fast-activating voltage-gated ATP-release channel in type II taste bud cells, ATP acting as a neurotransmitter to activate afferent neural gustatory pathways. Acts both as a voltage-gated and calcium-activated ion channel: mediates neuronal excitability in response to membrane depolarization and low extracellular Ca(2+) concentration. Has poor ion selectivity and forms a wide pore (around 14 Angstroms) that mediates permeation of small ions including Ca(2+), Na(+), K(+) and Cl(-), as well as larger ions such as ATP(4-). The sequence is that of Calcium homeostasis modulator protein 3 from Mus musculus (Mouse).